The chain runs to 118 residues: Large ribosomal subunit protein bL20c (118 aa).

It belongs to the bacterial ribosomal protein bL20 family.

Its subcellular location is the plastid. Its function is as follows. Binds directly to 23S ribosomal RNA and is necessary for the in vitro assembly process of the 50S ribosomal subunit. It is not involved in the protein synthesizing functions of that subunit. This Aneura mirabilis (Parasitic liverwort) protein is Large ribosomal subunit protein bL20c.